A 325-amino-acid chain; its full sequence is Germination protease (325 aa).

A propeptide spanning residues 1-7 is cleaved from the precursor; sequence MYNVRTD.

This sequence belongs to the peptidase A25 family. In terms of assembly, homotetramer. Post-translationally, autoproteolytically processed. The inactive tetrameric zymogen termed p46 autoprocesses to a smaller form termed p41, which is active only during spore germination.

The enzyme catalyses Endopeptidase action with P4 Glu or Asp, P1 preferably Glu &gt; Asp, P1' hydrophobic and P2' Ala.. Initiates the rapid degradation of small, acid-soluble proteins during spore germination. The chain is Germination protease from Clostridium perfringens (strain 13 / Type A).